The following is a 214-amino-acid chain: Ribonuclease S-2 (214 aa).

A signal peptide spans 1–22 (MSKSQLTSVFFILLCALSPIYG). Cysteines 38 and 43 form a disulfide. Asn-49 carries an N-linked (GlcNAc...) asparagine glycan. His-53 functions as the Proton donor in the catalytic mechanism. His-53 provides a ligand contact to RNA. An N-linked (GlcNAc...) asparagine glycan is attached at Asn-59. A disulfide bridge links Cys-67 with Cys-116. Residues 91–92 (DL), Lys-94, and Phe-105 contribute to the RNA site. Glu-109 is a catalytic residue. 112 to 113 (KH) contacts RNA. Residue His-113 is the Proton acceptor of the active site. N-linked (GlcNAc...) asparagine glycosylation is present at Asn-160. 2 disulfide bridges follow: Cys-175–Cys-204 and Cys-187–Cys-198.

This sequence belongs to the RNase T2 family.

The protein localises to the secreted. The protein resides in the extracellular space. It catalyses the reaction a ribonucleotidyl-ribonucleotide-RNA + H2O = a 3'-end 3'-phospho-ribonucleotide-RNA + a 5'-end dephospho-ribonucleoside-RNA + H(+). Its function is as follows. Self-incompatibility (SI) is the inherited ability of a flowering plant to prevent self-fertilization by discriminating between self and non-self pollen during pollination. In many species of the Solanaceae, self-incompatibility is controlled by the single, multiallelic locus S. This stylar glycoprotein is associated with expression of self-incompatibility in potato. This chain is Ribonuclease S-2 (S-2), found in Nicotiana alata (Winged tobacco).